The primary structure comprises 162 residues: Phosphopantetheine adenylyltransferase (162 aa).

Thr10 contacts substrate. ATP is bound by residues 10 to 11 (TF) and His18. The substrate site is built by Lys42, Met74, and Arg88. Residues 89-91 (GLR), Glu99, and 124-130 (YAFLSST) contribute to the ATP site.

It belongs to the bacterial CoaD family. As to quaternary structure, homohexamer. Mg(2+) is required as a cofactor.

It is found in the cytoplasm. It catalyses the reaction (R)-4'-phosphopantetheine + ATP + H(+) = 3'-dephospho-CoA + diphosphate. Its pathway is cofactor biosynthesis; coenzyme A biosynthesis; CoA from (R)-pantothenate: step 4/5. Functionally, reversibly transfers an adenylyl group from ATP to 4'-phosphopantetheine, yielding dephospho-CoA (dPCoA) and pyrophosphate. This is Phosphopantetheine adenylyltransferase from Aliivibrio fischeri (strain ATCC 700601 / ES114) (Vibrio fischeri).